The following is a 292-amino-acid chain: Histamine N-methyltransferase (292 aa).

Substrate is bound at residue glutamate 28. Residues glycine 60, glutamate 89, glutamine 94, serine 120, and isoleucine 142 each contribute to the S-adenosyl-L-methionine site. Substrate is bound at residue asparagine 283.

Belongs to the class I-like SAM-binding methyltransferase superfamily. HNMT family. In terms of assembly, monomer.

The protein resides in the cytoplasm. The catalysed reaction is histamine + S-adenosyl-L-methionine = N(tau)-methylhistamine + S-adenosyl-L-homocysteine + H(+). Functionally, inactivates histamine by N-methylation. Plays an important role in degrading histamine and in regulating the airway response to histamine. The sequence is that of Histamine N-methyltransferase (HNMT) from Pongo abelii (Sumatran orangutan).